The primary structure comprises 465 residues: Uronate isomerase (465 aa).

The protein belongs to the metallo-dependent hydrolases superfamily. Uronate isomerase family.

It catalyses the reaction D-glucuronate = D-fructuronate. It carries out the reaction aldehydo-D-galacturonate = keto-D-tagaturonate. Its pathway is carbohydrate metabolism; pentose and glucuronate interconversion. This Streptococcus equi subsp. zooepidemicus (strain MGCS10565) protein is Uronate isomerase.